Here is a 429-residue protein sequence, read N- to C-terminus: MKTFEKSSAAFNRAKPLMPGGVNSPVRAFKSVNMDPVFMERGKGANIYDIDGNEYIDYVLSWGPLILGHADDQVVEKLKETTEKGTSFGAPSELETKLAELVIERVPSIEVVRMVNSGTEATMSALRLARGYTGRNKILKFEGCYHGHGDSLLIKAGSGVATLGLPDSPGVPETVAQNTLTVPYNDLESVRYAFEQFGDDLAGVIVEPVAGNMGVVPPEPGFLEELRRLTEENGTLLIFDEVMTGFRVGYHCAQGAFGITPDLTCLGKVIGGGLPVGAYGGKREIMEQIAPSGPIYQAGTLSGNPLAMTAGYETLVQLTEANYEYFDRLGDRLAEGLSAVAKEYDIPHYTSRAGSMVGFFFTDKKVKNFADASSSDLEFFAKYFKEMLHLGVSLPPSQFEGMFLSTKHTEADIDFTVDAARQAFKRLKK.

Lysine 268 is modified (N6-(pyridoxal phosphate)lysine).

The protein belongs to the class-III pyridoxal-phosphate-dependent aminotransferase family. HemL subfamily. In terms of assembly, homodimer. Pyridoxal 5'-phosphate is required as a cofactor.

Its subcellular location is the cytoplasm. It carries out the reaction (S)-4-amino-5-oxopentanoate = 5-aminolevulinate. It participates in porphyrin-containing compound metabolism; protoporphyrin-IX biosynthesis; 5-aminolevulinate from L-glutamyl-tRNA(Glu): step 2/2. The protein is Glutamate-1-semialdehyde 2,1-aminomutase 2 of Halalkalibacterium halodurans (strain ATCC BAA-125 / DSM 18197 / FERM 7344 / JCM 9153 / C-125) (Bacillus halodurans).